A 258-amino-acid chain; its full sequence is Imidazole glycerol phosphate synthase subunit HisF (258 aa).

Active-site residues include Asp-11 and Asp-130.

Belongs to the HisA/HisF family. In terms of assembly, heterodimer of HisH and HisF.

It is found in the cytoplasm. The enzyme catalyses 5-[(5-phospho-1-deoxy-D-ribulos-1-ylimino)methylamino]-1-(5-phospho-beta-D-ribosyl)imidazole-4-carboxamide + L-glutamine = D-erythro-1-(imidazol-4-yl)glycerol 3-phosphate + 5-amino-1-(5-phospho-beta-D-ribosyl)imidazole-4-carboxamide + L-glutamate + H(+). Its pathway is amino-acid biosynthesis; L-histidine biosynthesis; L-histidine from 5-phospho-alpha-D-ribose 1-diphosphate: step 5/9. In terms of biological role, IGPS catalyzes the conversion of PRFAR and glutamine to IGP, AICAR and glutamate. The HisF subunit catalyzes the cyclization activity that produces IGP and AICAR from PRFAR using the ammonia provided by the HisH subunit. This Yersinia pseudotuberculosis serotype O:1b (strain IP 31758) protein is Imidazole glycerol phosphate synthase subunit HisF.